Reading from the N-terminus, the 804-residue chain is Lon protease 2 (804 aa).

The Lon N-terminal domain occupies 19-216 (VPILPLRNSV…LVLAMVGRQL (198 aa)). 367–374 (GPPGVGKT) contacts ATP. Residues 603-784 (TLQPGVATGL…EEILPLVLEP (182 aa)) enclose the Lon proteolytic domain. Catalysis depends on residues serine 690 and lysine 733. The segment at 782-804 (LEPPRRAPAQSASPEELEEQAGV) is disordered.

This sequence belongs to the peptidase S16 family. As to quaternary structure, homohexamer. Organized in a ring with a central cavity.

The protein resides in the cytoplasm. The catalysed reaction is Hydrolysis of proteins in presence of ATP.. Its function is as follows. ATP-dependent serine protease that mediates the selective degradation of mutant and abnormal proteins as well as certain short-lived regulatory proteins. Required for cellular homeostasis and for survival from DNA damage and developmental changes induced by stress. Degrades polypeptides processively to yield small peptide fragments that are 5 to 10 amino acids long. Binds to DNA in a double-stranded, site-specific manner. This Sorangium cellulosum (strain So ce56) (Polyangium cellulosum (strain So ce56)) protein is Lon protease 2.